The primary structure comprises 495 residues: 3-octaprenyl-4-hydroxybenzoate carboxy-lyase (495 aa).

A Mn(2+)-binding site is contributed by N171. Prenylated FMN-binding positions include 174–176, 188–190, and 193–194; these read IYR, RWL, and RG. E237 is a Mn(2+) binding site. The active-site Proton donor is D286.

Belongs to the UbiD family. As to quaternary structure, homohexamer. Requires prenylated FMN as cofactor. Mn(2+) is required as a cofactor.

Its subcellular location is the cell membrane. The enzyme catalyses a 4-hydroxy-3-(all-trans-polyprenyl)benzoate + H(+) = a 2-(all-trans-polyprenyl)phenol + CO2. It participates in cofactor biosynthesis; ubiquinone biosynthesis. Functionally, catalyzes the decarboxylation of 3-octaprenyl-4-hydroxy benzoate to 2-octaprenylphenol, an intermediate step in ubiquinone biosynthesis. The chain is 3-octaprenyl-4-hydroxybenzoate carboxy-lyase from Hamiltonella defensa subsp. Acyrthosiphon pisum (strain 5AT).